The following is a 264-amino-acid chain: Phosphoribosylaminoimidazole-succinocarboxamide synthase 1 (264 aa).

It belongs to the SAICAR synthetase family.

It carries out the reaction 5-amino-1-(5-phospho-D-ribosyl)imidazole-4-carboxylate + L-aspartate + ATP = (2S)-2-[5-amino-1-(5-phospho-beta-D-ribosyl)imidazole-4-carboxamido]succinate + ADP + phosphate + 2 H(+). It participates in purine metabolism; IMP biosynthesis via de novo pathway; 5-amino-1-(5-phospho-D-ribosyl)imidazole-4-carboxamide from 5-amino-1-(5-phospho-D-ribosyl)imidazole-4-carboxylate: step 1/2. The sequence is that of Phosphoribosylaminoimidazole-succinocarboxamide synthase 1 (purC1) from Mesorhizobium japonicum (strain LMG 29417 / CECT 9101 / MAFF 303099) (Mesorhizobium loti (strain MAFF 303099)).